A 393-amino-acid polypeptide reads, in one-letter code: S-adenosylmethionine decarboxylase proenzyme (393 aa).

Residues Glu11 and Glu14 contribute to the active site. Ser71 functions as the Schiff-base intermediate with substrate; via pyruvic acid in the catalytic mechanism. A Pyruvic acid (Ser); by autocatalysis modification is found at Ser71. Cys85 functions as the Proton donor; for catalytic activity in the catalytic mechanism. Active-site proton acceptor; for processing activity residues include Ser236 and His249.

This sequence belongs to the eukaryotic AdoMetDC family. Pyruvate serves as cofactor. Post-translationally, is synthesized initially as an inactive proenzyme. Formation of the active enzyme involves a self-maturation process in which the active site pyruvoyl group is generated from an internal serine residue via an autocatalytic post-translational modification. Two non-identical subunits are generated from the proenzyme in this reaction, and the pyruvate is formed at the N-terminus of the alpha chain, which is derived from the carboxyl end of the proenzyme. The post-translation cleavage follows an unusual pathway, termed non-hydrolytic serinolysis, in which the side chain hydroxyl group of the serine supplies its oxygen atom to form the C-terminus of the beta chain, while the remainder of the serine residue undergoes an oxidative deamination to produce ammonia and the pyruvoyl group blocking the N-terminus of the alpha chain.

It catalyses the reaction S-adenosyl-L-methionine + H(+) = S-adenosyl 3-(methylsulfanyl)propylamine + CO2. Its pathway is amine and polyamine biosynthesis; S-adenosylmethioninamine biosynthesis; S-adenosylmethioninamine from S-adenosyl-L-methionine: step 1/1. The polypeptide is S-adenosylmethionine decarboxylase proenzyme (SAMDC) (Hordeum chilense (Barley)).